We begin with the raw amino-acid sequence, 349 residues long: Isopentenyl-diphosphate delta-isomerase (349 aa).

6–7 provides a ligand contact to substrate; sequence RK. FMN-binding positions include 62–64, Ser93, and Asn122; that span reads AMT. Gln152 is a substrate binding site. Glu153 is a Mg(2+) binding site. Residues Lys184, Thr214, 258–259, and 280–281 contribute to the FMN site; these read GG and AG.

It belongs to the IPP isomerase type 2 family. In terms of assembly, homooctamer. Dimer of tetramers. Requires FMN as cofactor. It depends on NADPH as a cofactor. Mg(2+) is required as a cofactor.

It is found in the cytoplasm. It carries out the reaction isopentenyl diphosphate = dimethylallyl diphosphate. Involved in the biosynthesis of isoprenoids. Catalyzes the 1,3-allylic rearrangement of the homoallylic substrate isopentenyl (IPP) to its allylic isomer, dimethylallyl diphosphate (DMAPP). The sequence is that of Isopentenyl-diphosphate delta-isomerase from Bacillus cytotoxicus (strain DSM 22905 / CIP 110041 / 391-98 / NVH 391-98).